The sequence spans 428 residues: MDSISSPSTSSSASSTPKLISEKCLVCFQPSHGNHFGVDSCRACAAFFRRVFVTHKQQFPCREGDNKCTPDEWGRWSCKRCRSDKCFALGMKPDNIQRDRDRFIFSDNFRDDRKRKTSESIVPLSVERFVGKQLVTTYTSTGSGKNIEYITFFDLTPIIKDADYILKRIPKLEKSVKVKSSLEQLAFGLQEVRKEQLFESVPELRKIGKMETWDNWVKGMRRAGEWIMHFEEFRQLEQEEKMVILKCMWHLFIRLERISMTAEMRRMKLCDDKEFIYGTEQRINYDTLEIDRDWFSEATDREVRSFIGPLPRWFCETIIDALMELRPSDVELSFMLCNLCFHLTGQKLGGRIQEITDRLQDVLANDLHKYYLAKDKYSRYSYRLTKLLSLNRQYKNDLEIRRQGIFLANTLNIFRVKLSHPEMFQFSC.

The segment at residues S21–R98 is a DNA-binding region (nuclear receptor). 2 consecutive NR C4-type zinc fingers follow at residues C24–C44 and C61–C86. Residues S181–S427 form the NR LBD domain.

Belongs to the nuclear hormone receptor family.

It localises to the nucleus. Functionally, orphan nuclear receptor. This chain is Nuclear hormone receptor family member nhr-44 (nhr-44), found in Caenorhabditis elegans.